The primary structure comprises 329 residues: MAFGAPRGRGGDRGGFGGRGGSRGGFGGARGGRGGSRGGFGGDRGGRGGSRGGFGGDRGGRGGRGGPRGGARGGRGGARGGARGGAKVVIEPHRHAGVFIARGKEDLLVTRNIAPGESVYGEKRISIEEPSKEEGAAPTKIEYRVWNPFRSKLAAGIMGGIDELGIAPGKKVLYLGAASGTSVSHVADVVGPEGMVYAVEFSHRPGRELIGMAKKRPNVIPIIDDARHPQKYRMLIGMVDAVFADVAQPDQARIIALNSHLFLKDQGTVVISIKANCIDSTVDAETVFAREVQKLREERIKPLEQLTLEPYERDHCIVVGRYVRSGLKK.

The disordered stretch occupies residues Met1–Gly85. Residues Arg13–Gly84 show a composition bias toward gly residues. S-adenosyl-L-methionine is bound by residues Thr181–Ser182, Glu200–Phe201, Asp225–Ala226, and Asp245–Gln248.

Belongs to the methyltransferase superfamily. Fibrillarin family. In terms of assembly, component of box C/D small nucleolar ribonucleoprotein (snoRNP) particles that contain SNU13, NOP1, SIK1/NOP56 and NOP58, plus a guide RNA. By homology to other fibrillarins, some or all of the N-terminal domain arginines are modified to asymmetric dimethylarginine (DMA).

Its subcellular location is the nucleus. It localises to the nucleolus. The catalysed reaction is L-glutaminyl-[histone H2A] + S-adenosyl-L-methionine = N(5)-methyl-L-glutaminyl-[histone H2A] + S-adenosyl-L-homocysteine + H(+). S-adenosyl-L-methionine-dependent methyltransferase that has the ability to methylate both RNAs and proteins. Involved in pre-rRNA processing. Utilizes the methyl donor S-adenosyl-L-methionine to catalyze the site-specific 2'-hydroxyl methylation of ribose moieties in pre-ribosomal RNA. Site specificity is provided by a guide RNA that base pairs with the substrate. Methylation occurs at a characteristic distance from the sequence involved in base pairing with the guide RNA. Also acts as a protein methyltransferase by mediating methylation of 'Gln-105' of histone H2A (H2AQ105me), a modification that impairs binding of the FACT complex and is specifically present at 35S ribosomal DNA locus. In Debaryomyces hansenii (strain ATCC 36239 / CBS 767 / BCRC 21394 / JCM 1990 / NBRC 0083 / IGC 2968) (Yeast), this protein is rRNA 2'-O-methyltransferase fibrillarin (NOP1).